Reading from the N-terminus, the 207-residue chain is Dephospho-CoA kinase (207 aa).

The 199-residue stretch at 5–203 (AVGLTGGVAC…ARYRALASVF (199 aa)) folds into the DPCK domain. 13–18 (ACGKSL) provides a ligand contact to ATP.

Belongs to the CoaE family.

The protein resides in the cytoplasm. It carries out the reaction 3'-dephospho-CoA + ATP = ADP + CoA + H(+). Its pathway is cofactor biosynthesis; coenzyme A biosynthesis; CoA from (R)-pantothenate: step 5/5. Its function is as follows. Catalyzes the phosphorylation of the 3'-hydroxyl group of dephosphocoenzyme A to form coenzyme A. The protein is Dephospho-CoA kinase of Xylella fastidiosa (strain Temecula1 / ATCC 700964).